The following is a 215-amino-acid chain: 3-isopropylmalate dehydratase small subunit (215 aa).

The protein belongs to the LeuD family. LeuD type 1 subfamily. Heterodimer of LeuC and LeuD.

It catalyses the reaction (2R,3S)-3-isopropylmalate = (2S)-2-isopropylmalate. Its pathway is amino-acid biosynthesis; L-leucine biosynthesis; L-leucine from 3-methyl-2-oxobutanoate: step 2/4. Its function is as follows. Catalyzes the isomerization between 2-isopropylmalate and 3-isopropylmalate, via the formation of 2-isopropylmaleate. This is 3-isopropylmalate dehydratase small subunit from Xanthomonas oryzae pv. oryzae (strain MAFF 311018).